A 347-amino-acid polypeptide reads, in one-letter code: Fatty acid elongase 2 (347 aa).

Over Met1–Glu62 the chain is Lumenal. Asn32 carries N-linked (GlcNAc...) asparagine glycosylation. A helical transmembrane segment spans residues Leu63–Phe83. Over Gly84–Lys96 the chain is Cytoplasmic. A helical transmembrane segment spans residues Leu97–Met119. Over Val120 to Gln122 the chain is Lumenal. A helical transmembrane segment spans residues Leu123–Trp142. The Cytoplasmic portion of the chain corresponds to Thr143–Leu146. The chain crosses the membrane as a helical span at residues Val147–Leu169. At Lys170–Ser200 the chain is on the lumenal side. A HxxHH motif motif is present at residues His178 to His182. Residues Trp201 to Ala221 traverse the membrane as a helical segment. Residues Ala222–Glu231 are Cytoplasmic-facing. A helical membrane pass occupies residues Trp232–Gln254. The Lumenal segment spans residues Lys255 to Thr275. Residues Ala276–Ile296 traverse the membrane as a helical segment. At Asn297–Arg347 the chain is on the cytoplasmic side. Thr334 carries the post-translational modification Phosphothreonine. A phosphoserine mark is found at Ser336 and Ser338. Residues Arg344 to Arg347 carry the Di-lysine-like motif motif.

This sequence belongs to the ELO family.

The protein localises to the endoplasmic reticulum membrane. It carries out the reaction a very-long-chain acyl-CoA + malonyl-CoA + H(+) = a very-long-chain 3-oxoacyl-CoA + CO2 + CoA. The enzyme catalyses octadecanoyl-CoA + malonyl-CoA + H(+) = 3-oxoeicosanoyl-CoA + CO2 + CoA. The catalysed reaction is hexadecanoyl-CoA + malonyl-CoA + H(+) = 3-oxooctadecanoyl-CoA + CO2 + CoA. It catalyses the reaction eicosanoyl-CoA + malonyl-CoA + H(+) = 3-oxodocosanoyl-CoA + CO2 + CoA. It carries out the reaction docosanoyl-CoA + malonyl-CoA + H(+) = 3-oxotetracosanoyl-CoA + CO2 + CoA. In terms of biological role, component of a microsomal membrane-bound long-chain fatty acid elongation system, which produces the 20-26-carbon very long-chain fatty acids (VLCFA) from long-chain fatty acid precursors and is involved ceramide and inositol sphingolipid biosynthesis. Component of elongase II, which elongates 16-18 carbon fatty acyl-CoAs such as palmitoyl-CoA and stearoyl-CoA to 20-22-carbon fatty acids by incorporation of malonyl-CoA. Involved in the synthesis of 1,3-beta-glucan. The enzymes active site faces the cytosol, whereas VLCFA length is determined by a lysine near the luminal end of transmembrane helix 6. Plays an important role in lipotoxic cell death induced by oleic acid through maintaining a balanced fatty acid composition in thr plasma membrane. The sequence is that of Fatty acid elongase 2 from Saccharomyces cerevisiae (strain ATCC 204508 / S288c) (Baker's yeast).